The following is a 477-amino-acid chain: Aspartyl/glutamyl-tRNA(Asn/Gln) amidotransferase subunit B (477 aa).

The protein belongs to the GatB/GatE family. GatB subfamily. As to quaternary structure, heterotrimer of A, B and C subunits.

It carries out the reaction L-glutamyl-tRNA(Gln) + L-glutamine + ATP + H2O = L-glutaminyl-tRNA(Gln) + L-glutamate + ADP + phosphate + H(+). The enzyme catalyses L-aspartyl-tRNA(Asn) + L-glutamine + ATP + H2O = L-asparaginyl-tRNA(Asn) + L-glutamate + ADP + phosphate + 2 H(+). Its function is as follows. Allows the formation of correctly charged Asn-tRNA(Asn) or Gln-tRNA(Gln) through the transamidation of misacylated Asp-tRNA(Asn) or Glu-tRNA(Gln) in organisms which lack either or both of asparaginyl-tRNA or glutaminyl-tRNA synthetases. The reaction takes place in the presence of glutamine and ATP through an activated phospho-Asp-tRNA(Asn) or phospho-Glu-tRNA(Gln). This Legionella pneumophila (strain Paris) protein is Aspartyl/glutamyl-tRNA(Asn/Gln) amidotransferase subunit B.